A 394-amino-acid chain; its full sequence is Elongation factor Tu (394 aa).

Positions 10–204 (KPHVNVGTIG…AVDEWIPTPT (195 aa)) constitute a tr-type G domain. The interval 19–26 (GHIDHGKT) is G1. 19–26 (GHIDHGKT) contributes to the GTP binding site. Threonine 26 is a binding site for Mg(2+). The G2 stretch occupies residues 60 to 64 (GITIN). A G3 region spans residues 81-84 (DCPG). GTP is bound by residues 81-85 (DCPGH) and 136-139 (NKCD). The tract at residues 136–139 (NKCD) is G4. Residues 174-176 (SAL) are G5.

This sequence belongs to the TRAFAC class translation factor GTPase superfamily. Classic translation factor GTPase family. EF-Tu/EF-1A subfamily. In terms of assembly, monomer.

The protein resides in the cytoplasm. It catalyses the reaction GTP + H2O = GDP + phosphate + H(+). Its function is as follows. GTP hydrolase that promotes the GTP-dependent binding of aminoacyl-tRNA to the A-site of ribosomes during protein biosynthesis. The polypeptide is Elongation factor Tu (Mycoplasma genitalium (strain ATCC 33530 / DSM 19775 / NCTC 10195 / G37) (Mycoplasmoides genitalium)).